We begin with the raw amino-acid sequence, 55 residues long: ATP synthase F(0) complex subunit 8 (55 aa).

A helical membrane pass occupies residues 8 to 24 (PWFMIMLMTWFTYSLLI).

It belongs to the ATPase protein 8 family. As to quaternary structure, component of the ATP synthase complex composed at least of ATP5F1A/subunit alpha, ATP5F1B/subunit beta, ATP5MC1/subunit c (homooctomer), MT-ATP6/subunit a, MT-ATP8/subunit 8, ATP5ME/subunit e, ATP5MF/subunit f, ATP5MG/subunit g, ATP5MK/subunit k, ATP5MJ/subunit j, ATP5F1C/subunit gamma, ATP5F1D/subunit delta, ATP5F1E/subunit epsilon, ATP5PF/subunit F6, ATP5PB/subunit b, ATP5PD/subunit d, ATP5PO/subunit OSCP. ATP synthase complex consists of a soluble F(1) head domain (subunits alpha(3) and beta(3)) - the catalytic core - and a membrane F(0) domain - the membrane proton channel (subunits c, a, 8, e, f, g, k and j). These two domains are linked by a central stalk (subunits gamma, delta, and epsilon) rotating inside the F1 region and a stationary peripheral stalk (subunits F6, b, d, and OSCP).

The protein localises to the mitochondrion membrane. In terms of biological role, subunit 8, of the mitochondrial membrane ATP synthase complex (F(1)F(0) ATP synthase or Complex V) that produces ATP from ADP in the presence of a proton gradient across the membrane which is generated by electron transport complexes of the respiratory chain. ATP synthase complex consist of a soluble F(1) head domain - the catalytic core - and a membrane F(1) domain - the membrane proton channel. These two domains are linked by a central stalk rotating inside the F(1) region and a stationary peripheral stalk. During catalysis, ATP synthesis in the catalytic domain of F(1) is coupled via a rotary mechanism of the central stalk subunits to proton translocation. In vivo, can only synthesize ATP although its ATP hydrolase activity can be activated artificially in vitro. Part of the complex F(0) domain. This Coturnix japonica (Japanese quail) protein is ATP synthase F(0) complex subunit 8.